A 179-amino-acid polypeptide reads, in one-letter code: tRNA (cytidine(56)-2'-O)-methyltransferase (179 aa).

S-adenosyl-L-methionine contacts are provided by residues leucine 82, 112–116, and 130–137; these read GAEKV and VGNQPHSE.

This sequence belongs to the aTrm56 family. As to quaternary structure, homodimer.

The protein resides in the cytoplasm. It carries out the reaction cytidine(56) in tRNA + S-adenosyl-L-methionine = 2'-O-methylcytidine(56) in tRNA + S-adenosyl-L-homocysteine + H(+). Its function is as follows. Specifically catalyzes the AdoMet-dependent 2'-O-ribose methylation of cytidine at position 56 in tRNAs. This Methanococcus maripaludis (strain C7 / ATCC BAA-1331) protein is tRNA (cytidine(56)-2'-O)-methyltransferase.